The sequence spans 95 residues: Small ribosomal subunit protein bS6 (95 aa).

It belongs to the bacterial ribosomal protein bS6 family.

Binds together with bS18 to 16S ribosomal RNA. The sequence is that of Small ribosomal subunit protein bS6 from Rhodococcus jostii (strain RHA1).